Here is a 436-residue protein sequence, read N- to C-terminus: Proteasome-activating nucleotidase (436 aa).

The stretch at Glu15–Ser97 forms a coiled coil. ATP-binding positions include Gly222–Leu227 and His361. The interval Met434 to Ala436 is docks into pockets in the proteasome alpha-ring to cause gate opening.

This sequence belongs to the AAA ATPase family. In terms of assembly, homohexamer. The hexameric complex has a two-ring architecture resembling a top hat that caps the 20S proteasome core at one or both ends. Upon ATP-binding, the C-terminus of PAN interacts with the alpha-rings of the proteasome core by binding to the intersubunit pockets.

It is found in the cytoplasm. Functionally, ATPase which is responsible for recognizing, binding, unfolding and translocation of substrate proteins into the archaeal 20S proteasome core particle. Is essential for opening the gate of the 20S proteasome via an interaction with its C-terminus, thereby allowing substrate entry and access to the site of proteolysis. Thus, the C-termini of the proteasomal ATPase function like a 'key in a lock' to induce gate opening and therefore regulate proteolysis. Unfolding activity requires energy from ATP hydrolysis, whereas ATP binding alone promotes ATPase-20S proteasome association which triggers gate opening, and supports translocation of unfolded substrates. This chain is Proteasome-activating nucleotidase, found in Methanoregula boonei (strain DSM 21154 / JCM 14090 / 6A8).